Reading from the N-terminus, the 85-residue chain is uncharacterized protein (85 aa).

3 helical membrane passes run 4–24 (LTLC…LGGA), 27–47 (SPWL…LIGE), and 61–81 (RLLL…LYLA).

The protein resides in the cell membrane. This is an uncharacterized protein from Pseudomonas aeruginosa (strain ATCC 15692 / DSM 22644 / CIP 104116 / JCM 14847 / LMG 12228 / 1C / PRS 101 / PAO1).